Consider the following 235-residue polypeptide: MLTTTILILLIVILMVSLHLYYRWYLLRSSPFNRTTAASTFFTDPSSTPGGLNPSIIKSLPIFTFSAVTALFAMECSVCLSEFKDNESGRVMPNCKHTFHVHCIDMWFHSHSSCPLCRSQIEPFAGGVKSSMDEVAISISDPVYGDTNHHEGTETTGDSVPEDSQRKPAAIEISQRNLGEIENDLSRSHSFRSPTDEPDDIFHSEFESRSGEVLLLLLLLSEFLIFCFRRSVACK.

Residues 1 to 21 (MLTTTILILLIVILMVSLHLY) traverse the membrane as a helical segment. An RING-type; atypical zinc finger spans residues 76-118 (CSVCLSEFKDNESGRVMPNCKHTFHVHCIDMWFHSHSSCPLCR). The disordered stretch occupies residues 143 to 167 (VYGDTNHHEGTETTGDSVPEDSQRK).

The protein belongs to the RING-type zinc finger family. ATL subfamily.

The protein localises to the membrane. The catalysed reaction is S-ubiquitinyl-[E2 ubiquitin-conjugating enzyme]-L-cysteine + [acceptor protein]-L-lysine = [E2 ubiquitin-conjugating enzyme]-L-cysteine + N(6)-ubiquitinyl-[acceptor protein]-L-lysine.. It participates in protein modification; protein ubiquitination. May be involved in the early steps of the plant defense signaling pathway. The sequence is that of RING-H2 finger protein ATL17 (ATL17) from Arabidopsis thaliana (Mouse-ear cress).